A 46-amino-acid polypeptide reads, in one-letter code: U-myrmeciitoxin(01)-Mg6a (46 aa).

Residues 1 to 20 (MNLKTFCFFLLGIFVTLTVT) form the signal peptide. Positions 21–33 (VIPIANADAEADT) are excised as a propeptide.

Post-translationally, contains 1 disulfide bond. Expressed by the venom gland.

Its subcellular location is the secreted. The polypeptide is U-myrmeciitoxin(01)-Mg6a (Myrmecia gulosa (Red bulldog ant)).